We begin with the raw amino-acid sequence, 213 residues long: GTP cyclohydrolase 1 (213 aa).

The disordered stretch occupies residues 1 to 27 (MDDVVKSLLQRTTSSLTKPAPARPSRE). Residues Cys100, His103, and Cys172 each coordinate Zn(2+).

Belongs to the GTP cyclohydrolase I family. Homomer.

The catalysed reaction is GTP + H2O = 7,8-dihydroneopterin 3'-triphosphate + formate + H(+). The protein operates within cofactor biosynthesis; 7,8-dihydroneopterin triphosphate biosynthesis; 7,8-dihydroneopterin triphosphate from GTP: step 1/1. In Beijerinckia indica subsp. indica (strain ATCC 9039 / DSM 1715 / NCIMB 8712), this protein is GTP cyclohydrolase 1.